The primary structure comprises 401 residues: Chalcone synthase 5 (401 aa).

The active site involves C168.

Belongs to the thiolase-like superfamily. Chalcone/stilbene synthases family.

It catalyses the reaction (E)-4-coumaroyl-CoA + 3 malonyl-CoA + 3 H(+) = 2',4,4',6'-tetrahydroxychalcone + 3 CO2 + 4 CoA. It functions in the pathway secondary metabolite biosynthesis; flavonoid biosynthesis. Functionally, the primary product of this enzyme is 4,2',4',6'-tetrahydroxychalcone (also termed naringenin-chalcone or chalcone) which can under specific conditions spontaneously isomerize into naringenin. This chain is Chalcone synthase 5 (CHS5), found in Sorghum bicolor (Sorghum).